A 352-amino-acid polypeptide reads, in one-letter code: Ion-translocating oxidoreductase complex subunit D (352 aa).

The next 5 membrane-spanning stretches (helical) occupy residues 20–40, 42–62, 78–109, 123–143, and 148–168; these read IMLL…WFFG, GTLV…ALVL, ALLT…VIIA, PAMI…TSWL, and IAVN…GHTA. Thr187 carries the FMN phosphoryl threonine modification. The next 5 helical transmembrane spans lie at 214–234, 242–262, 267–287, 301–321, and 322–342; these read ILAG…GVWL, WHIP…GWLF, LAAP…FFIL, LIFG…GGYP, and DGVA…DYYT.

It belongs to the NqrB/RnfD family. As to quaternary structure, the complex is composed of six subunits: RsxA, RsxB, RsxC, RsxD, RsxE and RsxG. It depends on FMN as a cofactor.

Its subcellular location is the cell inner membrane. Part of a membrane-bound complex that couples electron transfer with translocation of ions across the membrane. Required to maintain the reduced state of SoxR. In Escherichia coli O6:H1 (strain CFT073 / ATCC 700928 / UPEC), this protein is Ion-translocating oxidoreductase complex subunit D.